The chain runs to 568 residues: DNA ligase 2 (568 aa).

E254 contacts ATP. The N6-AMP-lysine intermediate role is filled by K256. Residues R261, R276, E306, F346, R425, and K431 each coordinate ATP.

Belongs to the ATP-dependent DNA ligase family. The cofactor is Mg(2+).

It carries out the reaction ATP + (deoxyribonucleotide)n-3'-hydroxyl + 5'-phospho-(deoxyribonucleotide)m = (deoxyribonucleotide)n+m + AMP + diphosphate.. DNA ligase that seals nicks in double-stranded DNA during DNA replication, DNA recombination and DNA repair. The polypeptide is DNA ligase 2 (Methanosarcina mazei (strain ATCC BAA-159 / DSM 3647 / Goe1 / Go1 / JCM 11833 / OCM 88) (Methanosarcina frisia)).